We begin with the raw amino-acid sequence, 401 residues long: Canavanine gamma-lyase (401 aa).

Position 214 is an N6-(pyridoxal phosphate)lysine (K214).

This sequence belongs to the trans-sulfuration enzymes family. The cofactor is pyridoxal 5'-phosphate.

It carries out the reaction L-canavanine + H2O = N-hydroxyguanidine + L-homoserine. Functionally, lyase involved in the degradation of canavanine, the delta-oxa-analog of arginine, allowing growth on canavanine as sole nitrogen and carbon source. Catalyzes the elimination of hydroxyguanidine from canavanine with a subsequent water addition to yield homoserine. This Rhizobium leguminosarum bv. trifolii (strain WSM2304) protein is Canavanine gamma-lyase.